A 385-amino-acid chain; its full sequence is 1-deoxy-D-xylulose 5-phosphate reductoisomerase 1 (385 aa).

NADPH is bound by residues threonine 11, glycine 12, serine 13, isoleucine 14, asparagine 39, and asparagine 122. Lysine 123 provides a ligand contact to 1-deoxy-D-xylulose 5-phosphate. NADPH is bound at residue glutamate 124. Aspartate 148 contacts Mn(2+). Positions 149, 150, 174, and 197 each coordinate 1-deoxy-D-xylulose 5-phosphate. Glutamate 150 contributes to the Mn(2+) binding site. Position 203 (glycine 203) interacts with NADPH. Residues serine 210, asparagine 215, lysine 216, and glutamate 219 each contribute to the 1-deoxy-D-xylulose 5-phosphate site. Glutamate 219 contacts Mn(2+).

This sequence belongs to the DXR family. The cofactor is Mg(2+). It depends on Mn(2+) as a cofactor.

The catalysed reaction is 2-C-methyl-D-erythritol 4-phosphate + NADP(+) = 1-deoxy-D-xylulose 5-phosphate + NADPH + H(+). It functions in the pathway isoprenoid biosynthesis; isopentenyl diphosphate biosynthesis via DXP pathway; isopentenyl diphosphate from 1-deoxy-D-xylulose 5-phosphate: step 1/6. Catalyzes the NADPH-dependent rearrangement and reduction of 1-deoxy-D-xylulose-5-phosphate (DXP) to 2-C-methyl-D-erythritol 4-phosphate (MEP). This chain is 1-deoxy-D-xylulose 5-phosphate reductoisomerase 1, found in Bacillus thuringiensis subsp. konkukian (strain 97-27).